Reading from the N-terminus, the 125-residue chain is Conopressin-conophysin, isoform 1 (125 aa).

The signal sequence occupies residues 1-22 (MQMGRPTLLPCLLLLLVLSTQA). C23 and C28 are joined by a disulfide. G31 is modified (glycine amide). Residues 32-39 (GKRDVHMI) constitute a propeptide that is removed on maturation. Disulfide bonds link C45–C85, C48–C59, C53–C75, C60–C65, C92–C112, C104–C124, and C113–C118.

It belongs to the vasopressin/oxytocin family. As to expression, expressed by the venom gland.

It is found in the secreted. In terms of biological role, targets vasopressin-oxytocin related receptors. This Conus monile (Necklace cone) protein is Conopressin-conophysin, isoform 1.